The chain runs to 136 residues: Large ribosomal subunit protein uL16 (136 aa).

It belongs to the universal ribosomal protein uL16 family. Part of the 50S ribosomal subunit.

Binds 23S rRNA and is also seen to make contacts with the A and possibly P site tRNAs. The protein is Large ribosomal subunit protein uL16 of Buchnera aphidicola subsp. Cinara cedri (strain Cc).